The following is a 486-amino-acid chain: Cardiolipin synthase A (486 aa).

2 helical membrane passes run 3–23 (TFYT…IAGV) and 38–58 (MAWL…YLSV). 2 PLD phosphodiesterase domains span residues 219-246 (MDLR…VDPR) and 399-426 (EGGL…DMRS). Catalysis depends on residues His-224, Lys-226, Asp-231, His-404, Lys-406, and Asp-411.

This sequence belongs to the phospholipase D family. Cardiolipin synthase subfamily. ClsA sub-subfamily.

The protein localises to the cell inner membrane. The enzyme catalyses 2 a 1,2-diacyl-sn-glycero-3-phospho-(1'-sn-glycerol) = a cardiolipin + glycerol. In terms of biological role, catalyzes the reversible phosphatidyl group transfer from one phosphatidylglycerol molecule to another to form cardiolipin (CL) (diphosphatidylglycerol) and glycerol. The protein is Cardiolipin synthase A of Cronobacter sakazakii (strain ATCC BAA-894) (Enterobacter sakazakii).